A 216-amino-acid polypeptide reads, in one-letter code: Cytosolic-abundant heat soluble protein 2 (216 aa).

The segment covering 1 to 11 has biased composition (polar residues); the sequence is MSRDQGSTEYD. 2 disordered regions span residues 1 to 34 and 66 to 91; these read MSRD…DVRT and RISG…KDRE. A compositionally biased stretch (basic and acidic residues) spans 12-22; it reads ANQRQEQHQEQ. Polar residues-rich tracts occupy residues 25–34 and 68–77; these read TSYTHTDVRT and SGQSSETHVQ. The stretch at 81 to 180 forms a coiled coil; sequence EMEAEARKDR…ARLATQALDQ (100 aa). 2 CAHS motif regions span residues 115 to 133 and 152 to 170; these read YRKQ…LEKQ and QKRQ…LDRE.

This sequence belongs to the Cytosolic-abundant heat soluble protein (CAHS) family.

It is found in the cytoplasm. CAHS proteins are cytosolic heat soluble proteins that seem to contribute to the anhydrobiosis in tardigrades, but their specific mechanisms are yet to be identified. It is possible that protection during anhydrobiosis might occur via the stabilization of vitrifying small molecules such as sugars, but not via the direct glass transition of CAHS proteins themselves. This Ramazzottius varieornatus (Water bear) protein is Cytosolic-abundant heat soluble protein 2.